The chain runs to 328 residues: Phosphate acyltransferase (328 aa).

This sequence belongs to the PlsX family. In terms of assembly, homodimer. Probably interacts with PlsY.

The protein localises to the cytoplasm. The catalysed reaction is a fatty acyl-[ACP] + phosphate = an acyl phosphate + holo-[ACP]. It participates in lipid metabolism; phospholipid metabolism. Its function is as follows. Catalyzes the reversible formation of acyl-phosphate (acyl-PO(4)) from acyl-[acyl-carrier-protein] (acyl-ACP). This enzyme utilizes acyl-ACP as fatty acyl donor, but not acyl-CoA. The protein is Phosphate acyltransferase of Campylobacter jejuni subsp. doylei (strain ATCC BAA-1458 / RM4099 / 269.97).